Here is a 286-residue protein sequence, read N- to C-terminus: Tryptophan 2,3-dioxygenase (286 aa).

Substrate-binding positions include 55-59 (FIIIH), Tyr-117, and Arg-121. Heme is bound at residue His-244. Position 258 (Thr-258) interacts with substrate.

This sequence belongs to the tryptophan 2,3-dioxygenase family. In terms of assembly, homotetramer. Heme serves as cofactor.

It carries out the reaction L-tryptophan + O2 = N-formyl-L-kynurenine. It participates in amino-acid degradation; L-tryptophan degradation via kynurenine pathway; L-kynurenine from L-tryptophan: step 1/2. In terms of biological role, heme-dependent dioxygenase that catalyzes the oxidative cleavage of the L-tryptophan (L-Trp) pyrrole ring and converts L-tryptophan to N-formyl-L-kynurenine. Catalyzes the oxidative cleavage of the indole moiety. The sequence is that of Tryptophan 2,3-dioxygenase from Shewanella woodyi (strain ATCC 51908 / MS32).